Consider the following 366-residue polypeptide: MSGAEGTRDGASPTGGSALAAYTTLRLGGPAAGFVVAEDAETLADAVREADAAGSRLLVLGGGSNLVVADEGFDGHVVRIATRGLRFDSVGDGLVQLTAEAGEDWDAVVAETVRQGLGGLECLSGIPGLTGATPVQNVGAYGVEVSELLLSVDLLDRRTGNVRTVRAEDLGLVYRGSVLKHSDQAVVLRVRFLLRDGGRSAPVRYAELARTLDAEPGSRVDVAEAREAVLALRRGKGMVLDPADHDTWSAGSFFTNPIVEAADLSAVLSRIGAKVGPDQRVPQYPASDGRTKLSAAWLIERAGFGKGHPGPGGRARLSTKHTLALTNRGEATTADLLSLAREVRDGVLAQFGVSLAPEPVLVDCAL.

The 171-residue stretch at 27 to 197 (LGGPAAGFVV…LRVRFLLRDG (171 aa)) folds into the FAD-binding PCMH-type domain. Residue Arg-175 is part of the active site. Ser-252 (proton donor) is an active-site residue. Glu-358 is a catalytic residue.

It belongs to the MurB family. It depends on FAD as a cofactor.

It is found in the cytoplasm. The enzyme catalyses UDP-N-acetyl-alpha-D-muramate + NADP(+) = UDP-N-acetyl-3-O-(1-carboxyvinyl)-alpha-D-glucosamine + NADPH + H(+). Its pathway is cell wall biogenesis; peptidoglycan biosynthesis. Its function is as follows. Cell wall formation. This chain is UDP-N-acetylenolpyruvoylglucosamine reductase, found in Saccharopolyspora erythraea (strain ATCC 11635 / DSM 40517 / JCM 4748 / NBRC 13426 / NCIMB 8594 / NRRL 2338).